The sequence spans 400 residues: MLKVEMLSTGDEVLHGQIVDTNAAWLADFFFHQGLPLSRRNTVGDNLDDLVTILRERSQHADVLIVNGGLGPTSDDLSALAAATAKGEGLVLHEAWLKEMERYFHERGRVMAPSNRKQAELPASAEFINNPVGTACGFAVQLNRCLMFFTPGVPSEFKVMVEHEILPRLRERFSLPQPPVCLRLTTFGRSESDLAQSLDTLQLPPGVTMGYRSSMPIIELKLTGPASEQQAMEKLWLDVKRVAGQSVIFEGTEGLPAQISRELQNRQFSLTLSEQFTGGLLALQLSRAGAPLLACEVVPSQEETLAQTAHWITERRANHFAGLALAVSGFENEHLNFALATPDGTFALRVRFSTTRYSLAIRQEVCAMMALNMLRRWLNGQDIASEHGWIEVIESMTLSV.

This sequence belongs to the CinA family.

In Escherichia coli (strain 55989 / EAEC), this protein is CinA-like protein.